The chain runs to 283 residues: Ribosomal RNA small subunit methyltransferase A (283 aa).

Residues asparagine 13, leucine 15, glycine 39, glutamate 59, aspartate 87, and asparagine 108 each coordinate S-adenosyl-L-methionine.

This sequence belongs to the class I-like SAM-binding methyltransferase superfamily. rRNA adenine N(6)-methyltransferase family. RsmA subfamily.

The protein localises to the cytoplasm. The enzyme catalyses adenosine(1518)/adenosine(1519) in 16S rRNA + 4 S-adenosyl-L-methionine = N(6)-dimethyladenosine(1518)/N(6)-dimethyladenosine(1519) in 16S rRNA + 4 S-adenosyl-L-homocysteine + 4 H(+). Its function is as follows. Specifically dimethylates two adjacent adenosines (A1518 and A1519) in the loop of a conserved hairpin near the 3'-end of 16S rRNA in the 30S particle. May play a critical role in biogenesis of 30S subunits. The polypeptide is Ribosomal RNA small subunit methyltransferase A (Helicobacter hepaticus (strain ATCC 51449 / 3B1)).